Consider the following 374-residue polypeptide: MVLADGQMIWGRGFGATGAKVGEVCFHTAMTGYEEIMTDPSFASQIINFTFPHIGNVGANREDVEAKTLHALGCIVREDVTAPSNFRSLWRFDSWLKDHDRIGLAGVDTRALTGLLRKKGAQNAVIAHDPKGQFDIPALIETARSWAGLQGMDLARSVSTHQSYNWQEGIWSLQNGYSVVDNQKGPHVVAIDYGLKHNILRNLVEAGARVTVVKATASFDEVMAHKPDGVFLSNGPGDPAATAEYAVPVIRQLLDIKMPIFGICLGHQLLALAVGATTYKMHQGHRGANHPVKRLDDSKVEITSMNHGFAVATDSLPEQARPTHLSLFDGSLAGLELTDRPAFSVQYHPEASPGPQDSYYLFTKFIDLIAKERP.

A CPSase region spans residues 1–183 (MVLADGQMIW…QNGYSVVDNQ (183 aa)). Residues serine 41, glycine 235, and glycine 237 each coordinate L-glutamine. In terms of domain architecture, Glutamine amidotransferase type-1 spans 187–374 (HVVAIDYGLK…FIDLIAKERP (188 aa)). Cysteine 264 functions as the Nucleophile in the catalytic mechanism. Residues leucine 265, glutamine 268, asparagine 306, glycine 308, and phenylalanine 309 each contribute to the L-glutamine site. Active-site residues include histidine 348 and glutamate 350.

Belongs to the CarA family. In terms of assembly, composed of two chains; the small (or glutamine) chain promotes the hydrolysis of glutamine to ammonia, which is used by the large (or ammonia) chain to synthesize carbamoyl phosphate. Tetramer of heterodimers (alpha,beta)4.

The catalysed reaction is hydrogencarbonate + L-glutamine + 2 ATP + H2O = carbamoyl phosphate + L-glutamate + 2 ADP + phosphate + 2 H(+). The enzyme catalyses L-glutamine + H2O = L-glutamate + NH4(+). It functions in the pathway amino-acid biosynthesis; L-arginine biosynthesis; carbamoyl phosphate from bicarbonate: step 1/1. Its pathway is pyrimidine metabolism; UMP biosynthesis via de novo pathway; (S)-dihydroorotate from bicarbonate: step 1/3. Its function is as follows. Small subunit of the glutamine-dependent carbamoyl phosphate synthetase (CPSase). CPSase catalyzes the formation of carbamoyl phosphate from the ammonia moiety of glutamine, carbonate, and phosphate donated by ATP, constituting the first step of 2 biosynthetic pathways, one leading to arginine and/or urea and the other to pyrimidine nucleotides. The small subunit (glutamine amidotransferase) binds and cleaves glutamine to supply the large subunit with the substrate ammonia. The sequence is that of Carbamoyl phosphate synthase small chain from Zymomonas mobilis subsp. mobilis (strain ATCC 31821 / ZM4 / CP4).